Consider the following 333-residue polypeptide: Serine racemase (333 aa).

E13 provides a ligand contact to Mg(2+). Residues S31, S32, I33, K51, and T52 each contribute to the ATP site. K56 serves as the catalytic Proton acceptor. K56 carries the post-translational modification N6-(pyridoxal phosphate)lysine. P69 is a Ca(2+) binding site. Residue T71 is modified to Phosphothreonine. Residue T81 participates in Ca(2+) binding. S84 (proton acceptor) is an active-site residue. Pyridoxal 5'-phosphate is bound at residue N86. Q89 contributes to the ATP binding site. C113 carries the post-translational modification S-nitrosocysteine. Y121 contributes to the ATP binding site. N154 provides a ligand contact to pyridoxal 5'-phosphate. D178 provides a ligand contact to Mg(2+). The pyridoxal 5'-phosphate site is built by G185, G186, G187, G188, and M189. Mg(2+)-binding residues include E210, A214, D216, and N247. Residues E210, A214, D216, and N247 each contribute to the Ca(2+) site. Residues E210, A214, and D216 each coordinate Mn(2+). K279 contacts ATP. S313 lines the pyridoxal 5'-phosphate pocket. Residue N316 participates in ATP binding.

Belongs to the serine/threonine dehydratase family. In terms of assembly, homodimer. Requires Mg(2+) as cofactor. Mn(2+) serves as cofactor. The cofactor is Ca(2+). It depends on pyridoxal 5'-phosphate as a cofactor. Post-translationally, S-nitrosylated, leading to decrease the enzyme activity. Expressed in the cerebellum and frontal cortex (at protein level).

It catalyses the reaction L-serine = D-serine. It carries out the reaction D-serine = pyruvate + NH4(+). The enzyme catalyses L-serine = pyruvate + NH4(+). With respect to regulation, allosterically activated by magnesium, and possibly also other divalent metal cations. Allosterically activated by ATP, ADP or GTP. Competitively inhibited by malonate. Its function is as follows. Catalyzes the synthesis of D-serine from L-serine. D-serine is a key coagonist with glutamate at NMDA receptors. Has dehydratase activity towards both L-serine and D-serine. This chain is Serine racemase (Srr), found in Rattus norvegicus (Rat).